Here is a 444-residue protein sequence, read N- to C-terminus: MSEMTPREIVSELDKHIIGQDAAKRSVSIALRNRWRRMQLNEELRHEVTPKNILMIGPTGVGKTEIARRLAKLANAPFIKVEATKFTEVGYVGKEVDSIIRDLTDAAIKMVRMQSIDKNRYRAEEMAEERILDVLIPPAKNNWGQAEQPQEPSAARQAFRKKLREGQLDDKEIEIDLAAAPMGVEIMSPPGMEEMTSQLQSMFQNLGGQKQKPRKLKIKDAMKLLIEEEAAKLVNPEELKQEAIDAVEQHGIVFIDEIDKICKRGGNASGPDVSREGVQRDLLPLVEGCTVSTKHGMVKTDHILFIASGAFQVASPSDLIPELQGRLPIRVELKALTTHDFERILTEPNASITVQYKALMATEGVNIEFTEDGIKRIAQAAWQVNETTENIGARRLHTVLERLVEDISYDASEMNGQTVTIDAEYVSKHLDVLVADEDLSRFIL.

ATP-binding positions include isoleucine 18, 60-65 (GVGKTE), aspartate 256, glutamate 322, and arginine 394.

This sequence belongs to the ClpX chaperone family. HslU subfamily. A double ring-shaped homohexamer of HslV is capped on each side by a ring-shaped HslU homohexamer. The assembly of the HslU/HslV complex is dependent on binding of ATP.

It is found in the cytoplasm. Its function is as follows. ATPase subunit of a proteasome-like degradation complex; this subunit has chaperone activity. The binding of ATP and its subsequent hydrolysis by HslU are essential for unfolding of protein substrates subsequently hydrolyzed by HslV. HslU recognizes the N-terminal part of its protein substrates and unfolds these before they are guided to HslV for hydrolysis. The polypeptide is ATP-dependent protease ATPase subunit HslU (Klebsiella pneumoniae subsp. pneumoniae (strain ATCC 700721 / MGH 78578)).